The chain runs to 418 residues: tRNA(Met) cytidine acetate ligase (418 aa).

ATP is bound by residues G95, N161, and R186.

The protein belongs to the TmcAL family.

The protein resides in the cytoplasm. It carries out the reaction cytidine(34) in elongator tRNA(Met) + acetate + ATP = N(4)-acetylcytidine(34) in elongator tRNA(Met) + AMP + diphosphate. In terms of biological role, catalyzes the formation of N(4)-acetylcytidine (ac(4)C) at the wobble position of elongator tRNA(Met), using acetate and ATP as substrates. First activates an acetate ion to form acetyladenylate (Ac-AMP) and then transfers the acetyl group to tRNA to form ac(4)C34. This Thermotoga maritima (strain ATCC 43589 / DSM 3109 / JCM 10099 / NBRC 100826 / MSB8) protein is tRNA(Met) cytidine acetate ligase.